Reading from the N-terminus, the 368-residue chain is MNDETTPANKNPEKAELRCGWTTGACATAATKAALTALITGEFPDPVGIILPKGEVPYFQLANEGLGEGYAMAGIVKDAGDDPDVTHGATIISTVYPAPPGTGIIFRAGEGVGTVTREGLAIPPGEAAINPVPRRMMTEICEAICAEYGLPADLVITISVPGGEEIAQKTWNPRLGIIGGISILGTTGVVHPFYCSAWIHSIHRGIDVARAAGQKHVLGATGSTSEDAAQALYNLPDFAILDMGDFAGGVLKYLREHPIDRLTIAGGFAKLTKLAQGALDLHSSRSQVDKGFLWQIAERAGAPADMKERILLANTAMEVLELTQSIGIDIAGPIALEARQTALKTLRGAPVEVEIIVTDRKGNILARV.

This sequence belongs to the CbiD family.

It carries out the reaction Co-precorrin-5B + S-adenosyl-L-methionine = Co-precorrin-6A + S-adenosyl-L-homocysteine. It functions in the pathway cofactor biosynthesis; adenosylcobalamin biosynthesis; cob(II)yrinate a,c-diamide from sirohydrochlorin (anaerobic route): step 6/10. Catalyzes the methylation of C-1 in cobalt-precorrin-5B to form cobalt-precorrin-6A. This Brucella ovis (strain ATCC 25840 / 63/290 / NCTC 10512) protein is Cobalt-precorrin-5B C(1)-methyltransferase.